The sequence spans 127 residues: Fluoride-specific ion channel FluC (127 aa).

The next 2 membrane-spanning stretches (helical) occupy residues 4 to 24 (WFWIGLGGAAGTLARYGLSTW) and 36 to 56 (GTLAVNVIGSFLLGAIGEIAA). Positions 75 and 78 each coordinate Na(+). Residues 100–120 (LANIAITLVVCLLAGVLGMVV) traverse the membrane as a helical segment.

The protein belongs to the fluoride channel Fluc/FEX (TC 1.A.43) family.

Its subcellular location is the cell inner membrane. It catalyses the reaction fluoride(in) = fluoride(out). Its activity is regulated as follows. Na(+) is not transported, but it plays an essential structural role and its presence is essential for fluoride channel function. In terms of biological role, fluoride-specific ion channel. Important for reducing fluoride concentration in the cell, thus reducing its toxicity. The protein is Fluoride-specific ion channel FluC of Sorangium cellulosum (strain So ce56) (Polyangium cellulosum (strain So ce56)).